The following is a 419-amino-acid chain: Acetyltransferase fsoF (419 aa).

Asn2 carries N-linked (GlcNAc...) asparagine glycosylation. The next 2 helical transmembrane spans lie at 4-24 (TIIS…VVGF) and 62-82 (AFLG…AILS). The tract at residues 89-114 (QSPTSSLGGLIPPTTRDTPKTQNNAT) is disordered. Asn112 and Asn169 each carry an N-linked (GlcNAc...) asparagine glycan. Helical transmembrane passes span 230-250 (YWAI…VVAV), 314-334 (YVFM…SDVS), 337-357 (IPLG…GIML), and 386-406 (VSGP…WIYM).

The protein belongs to the wax synthase family.

The protein resides in the membrane. It carries out the reaction 3-O-(beta-D-glucopyranosyl)-2alpha-hydroxyisomotiol + acetyl-CoA = 3-O-(beta-D-glucopyranosyl)-2alpha-acetoxyisomotiol + CoA. It catalyses the reaction 2-deacetylfuscoatroside + acetyl-CoA = fuscoatroside + CoA. It participates in secondary metabolite biosynthesis; terpenoid biosynthesis. In terms of biological role, terpene cyclase-glycosyl transferase fusion protein; part of the gene cluster that mediates the biosynthesis of the enfumafungin-type antibiotic, fuscoatroside. Within the pathway, fsoF catalyzes the acetylation of C2-alpha-OH following the C2 hydroxylation by the cytochrome monooxygenase fsoD. The fuscoatroside biosynthesis is initiated by the cyclization of 2,3(S)-oxidosqualene through FsoA's terpene cyclase (TC) domain, leading to the formation of the fernane skeleton isomotiol, harboring a fernane triterpene skeleton with a C8-C9 double bond. Subsequently, C2-alpha-hydroxylation mediated by fsoD results in the production of 2-alpha-hydroxy-isomotiol, which is further acetylated by fsoF. The glycosyltransferase (GT) domain of FsoA may convert isomotiol, 2-alpha-hydroxy-isomotiol, and the acetylated derivative of 2-alpha-hydroxy-isomotiol into their corresponding glycosides 3-O-(beta-D-glucopyranosyl)-isomotiol, 3-O-(beta-D-glucopyranosyl)-2-alpha-hydroxy-isomotiol, and 3-O-(beta-D-glucopyranosyl)-2-alpha-acetoxy-isomotiol, which then undergo oxidative cleavage under the action of fsoE to form s 2-deacetoxy-fuscoatroside, 2-deacetyl-fuscoatroside, and fuscoatroside, respectively. Although hydroxylation followed by acetylation of 3-O-(beta-D-glucopyranosyl)-isomotiol and 2-deacetoxy-fuscoatroside by fsoD and fsoF could not be ruled out, this process is likely to occur with difficulty due to bulky steric hindrance caused by the presence of a glycan at C3 in these compounds. Interestingly, fsoE can also utilize the aglycones isomotiol and 2-alpha-hydroxy-isomotiol as substrates to generate 19-beta-hydroxy-isomotiol and 2-alpha,19-beta-dihydroxy-isomotiol, respectively. These reactions occur with lower efficiency. Finally, fsoE can further convert 2-alpha,19-beta-dihydroxy-isomotiol into 2-alpha-hydroxy-ismotiol-19-one and 2-alpha-hydroxy-ismotiol-19-one into 2-deacetyl-3-deglucopyranosyl-fuscoatroside. The protein is Acetyltransferase fsoF of Humicola fuscoatra.